Reading from the N-terminus, the 703-residue chain is Polyribonucleotide nucleotidyltransferase (703 aa).

Positions 486 and 492 each coordinate Mg(2+). Positions 554–613 constitute a KH domain; it reads PKIITTNIDPEKIRDVIGPGGKMINKIIAETGVKIDIEEDGRVYILTPDSAAAQKALKII. Residues 623–691 form the S1 motif domain; that stretch reads GEVYLGKVVR…KQGRINLSRK (69 aa).

It belongs to the polyribonucleotide nucleotidyltransferase family. Mg(2+) is required as a cofactor.

It localises to the cytoplasm. It catalyses the reaction RNA(n+1) + phosphate = RNA(n) + a ribonucleoside 5'-diphosphate. Involved in mRNA degradation. Catalyzes the phosphorolysis of single-stranded polyribonucleotides processively in the 3'- to 5'-direction. The protein is Polyribonucleotide nucleotidyltransferase of Ruminiclostridium cellulolyticum (strain ATCC 35319 / DSM 5812 / JCM 6584 / H10) (Clostridium cellulolyticum).